The chain runs to 275 residues: tRNA pseudouridine synthase A (275 aa).

D60 (nucleophile) is an active-site residue. Y119 provides a ligand contact to substrate.

This sequence belongs to the tRNA pseudouridine synthase TruA family. As to quaternary structure, homodimer.

It carries out the reaction uridine(38/39/40) in tRNA = pseudouridine(38/39/40) in tRNA. In terms of biological role, formation of pseudouridine at positions 38, 39 and 40 in the anticodon stem and loop of transfer RNAs. In Synechocystis sp. (strain ATCC 27184 / PCC 6803 / Kazusa), this protein is tRNA pseudouridine synthase A.